The sequence spans 559 residues: Excitatory amino acid transporter 5 (559 aa).

Over 1–16 (MVLDAVLARGRTVCKH) the chain is Cytoplasmic. 3 helical membrane passes run 17–37 (NGLL…GFFL), 60–80 (MLKM…LASL), and 94–114 (AYYL…VSII). The Extracellular segment spans residues 115 to 215 (HPGGAAQKET…EIVYKSEPGT (101 aa)). An N-linked (GlcNAc...) asparagine glycan is attached at asparagine 190. Residues 216-236 (SDGMNVLGIVIFSATMGIMLG) traverse the membrane as a helical segment. A glycan (N-linked (GlcNAc...) asparagine) is linked at asparagine 253. The next 6 membrane-spanning stretches (helical) occupy residues 259–279 (IVAV…AGKI), 298–318 (TVVC…YFLI), 329–349 (GVLQ…TLPI), 371–391 (VGAT…AIFI), 413–433 (AASI…VIVL), and 456–476 (FRTM…AHIC).

It belongs to the dicarboxylate/amino acid:cation symporter (DAACS) (TC 2.A.23) family. SLC1A7 subfamily. Interacts with the PDZ domains of DLG4. Expressed in retina, located in both cone and rod photoreceptor terminals and in axon terminals of rod bipolar cells.

The protein localises to the photoreceptor inner segment membrane. The protein resides in the synaptic cell membrane. It catalyses the reaction K(+)(in) + L-glutamate(out) + 3 Na(+)(out) + H(+)(out) = K(+)(out) + L-glutamate(in) + 3 Na(+)(in) + H(+)(in). The catalysed reaction is K(+)(in) + L-aspartate(out) + 3 Na(+)(out) + H(+)(out) = K(+)(out) + L-aspartate(in) + 3 Na(+)(in) + H(+)(in). The enzyme catalyses D-aspartate(out) + K(+)(in) + 3 Na(+)(out) + H(+)(out) = D-aspartate(in) + K(+)(out) + 3 Na(+)(in) + H(+)(in). In terms of biological role, sodium-dependent, high-affinity amino acid transporter that mediates the uptake of L-glutamate and also L-aspartate and D-aspartate. Functions as a symporter that transports one amino acid molecule together with two or three Na(+) ions and one proton, in parallel with the counter-transport of one K(+) ion. Acts primarily as an inhibitory glutamate-gated chloride channel being a major inhibitory presynaptic receptor at mammalian rod bipolar cell axon terminals. Glutamate binding gates a large Cl(-) conductance that mediates inhibition, affecting visual processing in the retina. The protein is Excitatory amino acid transporter 5 of Mus musculus (Mouse).